The following is a 363-amino-acid chain: MAP kinase kinase mkk-4 (363 aa).

The disordered stretch occupies residues 1–38; that stretch reads MVQEDDENLRNSMSLRPTSLSTRPTSLSVNGNEKTLPE. Positions 14-28 are enriched in low complexity; sequence SLRPTSLSTRPTSLS. The 265-residue stretch at 66–330 folds into the Protein kinase domain; it reads LQDLGAIGNG…YDTLKSFDFY (265 aa). ATP contacts are provided by residues 72-80 and K95; that span reads IGNGNFGTV. D194 (proton acceptor) is an active-site residue.

This sequence belongs to the protein kinase superfamily. STE Ser/Thr protein kinase family. MAP kinase kinase subfamily. Expressed in the pharynx, including the corpus, isthmus and terminal bulb.

Its subcellular location is the cytoplasm. It catalyses the reaction L-seryl-[protein] + ATP = O-phospho-L-seryl-[protein] + ADP + H(+). The enzyme catalyses L-threonyl-[protein] + ATP = O-phospho-L-threonyl-[protein] + ADP + H(+). It carries out the reaction L-tyrosyl-[protein] + ATP = O-phospho-L-tyrosyl-[protein] + ADP + H(+). Functionally, activity is required in presynaptic neurons, in a dose-dependent manner, for normal presynaptic development and morphology. Plays a role in the formation of muscle connections, also called muscle arm extensions, between the body wall and the motor axons in the dorsal and ventral cord. The polypeptide is MAP kinase kinase mkk-4 (mkk-4) (Caenorhabditis elegans).